The primary structure comprises 472 residues: Glutamine synthetase (472 aa).

The 89-residue stretch at serine 13–glycine 101 folds into the GS beta-grasp domain. The GS catalytic domain maps to proline 108–leucine 472. The Mg(2+) site is built by glutamate 133 and glutamate 135. Glutamate 211 is an ATP binding site. The Mg(2+) site is built by glutamate 216 and glutamate 224. Residues asparagine 268 to glycine 269 and glycine 269 each bind L-glutamate. Mg(2+) is bound at residue histidine 273. Residues histidine 275–serine 277 and serine 277 each bind ATP. L-glutamate is bound by residues arginine 325, glutamate 331, and arginine 343. The ATP site is built by arginine 343, arginine 348, and lysine 356. Mg(2+) is bound at residue glutamate 361. Arginine 363 serves as a coordination point for L-glutamate. Tyrosine 401 is subject to O-AMP-tyrosine.

The protein belongs to the glutamine synthetase family. As to quaternary structure, oligomer of 12 subunits arranged in the form of two hexameric ring. Mg(2+) is required as a cofactor.

It is found in the cytoplasm. The enzyme catalyses L-glutamate + NH4(+) + ATP = L-glutamine + ADP + phosphate + H(+). With respect to regulation, the activity of this enzyme could be controlled by adenylation under conditions of abundant glutamine. Catalyzes the ATP-dependent biosynthesis of glutamine from glutamate and ammonia. The polypeptide is Glutamine synthetase (Neisseria gonorrhoeae).